A 486-amino-acid polypeptide reads, in one-letter code: ATP synthase subunit beta (486 aa).

Residue 164-171 participates in ATP binding; it reads GGAGVGKT.

This sequence belongs to the ATPase alpha/beta chains family. F-type ATPases have 2 components, CF(1) - the catalytic core - and CF(0) - the membrane proton channel. CF(1) has five subunits: alpha(3), beta(3), gamma(1), delta(1), epsilon(1). CF(0) has four main subunits: a(1), b(1), b'(1) and c(9-12).

The protein resides in the cellular thylakoid membrane. The catalysed reaction is ATP + H2O + 4 H(+)(in) = ADP + phosphate + 5 H(+)(out). Functionally, produces ATP from ADP in the presence of a proton gradient across the membrane. The catalytic sites are hosted primarily by the beta subunits. This is ATP synthase subunit beta from Prochlorococcus marinus (strain AS9601).